The primary structure comprises 730 residues: MAKEKGLISPEDFAQLQKYIEYSTKRVSDVLKVFDDGEMNRFCQGDAIGYLGFEQFMKMYLEMEEVPHHLCWALFWSFHTSQVAAEKTKSKANVICLSDVYCYFTLLEGGRPEDKLEFTFKLYDMDRNGILDSTEVEKIILQMMRVAEYLDWDVSELRPILQEMMREMDQDGSGSVSLDEWVRAGATTVPLLVLLGMDVTMKDDGNHIWRPKRFTRLVYCNLCEQSISLGKQGLSCNFCKYIVHDHCAMKAQPCEVSTYAKSRKDIGVQSHLWVRGGCHSGRCDRCQKKIRTYHSLTGLHCVWCHLEIHDDCLQAVGPECDCGLLRDHILPPCSIYPSVLVSGQECKHKTTDDTSLCTPEAFRIEPVSNTHPLLVFINLKSGGKQGQSVLWKFQYILNPRQVFDLKDGPEPGLRFFKDVPQFRILVCGGDGTVGWVLETIDKANFATVPPVAVLPLGTGNDLARCLRWGRGYEGENLRKILKDIELSKVVYLDRWFLEVIPQQNGEKSDPVPSQIINNYFSIGVDASIAHRFHLMREKYPEKFNSRMKNKLWYFEFATSESIFSTCKKLEESVTVEICGKLLDLSDLSLEGIAVLNIPSTHGGSNLWGDTKRPHGDTCEINQALGSAAKIITDPDILKTCVPDMSDKRLEVVGIEGAIEMGQIYTRLKSAGHRLAKCSEITFQTTKTLPMQIDGEPWMQAPCTIKITHKNQMPMLMGPPSNSYNFFGFWS.

2 consecutive EF-hand domains span residues 111-146 (RPEDKLEFTFKLYDMDRNGILDSTEVEKIILQMMRV) and 156-191 (ELRPILQEMMREMDQDGSGSVSLDEWVRAGATTVPL). Residues Asp124, Asp126, Asn128, Glu135, Asp169, Asp171, Ser173, Ser175, and Glu180 each coordinate Ca(2+). 2 Phorbol-ester/DAG-type zinc fingers span residues 206-254 (NHIW…AQPC) and 270-320 (SHLW…GPEC). In terms of domain architecture, DAGKc spans 368–501 (SNTHPLLVFI…LDRWFLEVIP (134 aa)). At Lys479 the chain carries N6-acetyllysine.

It belongs to the eukaryotic diacylglycerol kinase family. As to quaternary structure, monomer.

The protein resides in the cytoplasm. It is found in the cytosol. The enzyme catalyses a 1,2-diacyl-sn-glycerol + ATP = a 1,2-diacyl-sn-glycero-3-phosphate + ADP + H(+). The catalysed reaction is a 1-O-alkyl-sn-glycerol + ATP = a 1-O-alkyl-sn-glycero-3-phosphate + ADP + H(+). It catalyses the reaction 1-O-alkyl-2-acyl-sn-glycerol + ATP = 1-O-alkyl-2-acyl-sn-glycero-3-phosphate + ADP + H(+). It carries out the reaction 1,2-dihexadecanoyl-sn-glycerol + ATP = 1,2-dihexadecanoyl-sn-glycero-3-phosphate + ADP + H(+). The enzyme catalyses 1-hexadecanoyl-2-(9Z-octadecenoyl)-sn-glycerol + ATP = 1-hexadecanoyl-2-(9Z-octadecenoyl)-sn-glycero-3-phosphate + ADP + H(+). The catalysed reaction is 2-(9Z-octadecenoyl)-glycerol + ATP = 2-(9Z-octadecenoyl)-sn-glycero-3-phosphate + ADP + H(+). It catalyses the reaction 1,2-di-(9Z-octadecenoyl)-sn-glycerol + ATP = 1,2-di-(9Z-octadecenoyl)-sn-glycero-3-phosphate + ADP + H(+). It carries out the reaction 1-octadecanoyl-2-(5Z,8Z,11Z,14Z-eicosatetraenoyl)-sn-glycerol + ATP = 1-octadecanoyl-2-(5Z,8Z,11Z,14Z-eicosatetraenoyl)-sn-glycero-3-phosphate + ADP + H(+). The enzyme catalyses 1,2-didecanoyl-sn-glycerol + ATP = 1,2-didecanoyl-sn-glycero-3-phosphate + ADP + H(+). The catalysed reaction is 1-O-hexadecyl-2-acetyl-sn-glycerol + ATP = 1-O-hexadecyl-2-acetyl-sn-glycero-3-phosphate + ADP + H(+). It catalyses the reaction 1-O-hexadecyl-2-(5Z,8Z,11Z,14Z-eicosatetraenoyl)-sn-glycerol + ATP = 1-O-hexadecyl-2-(5Z,8Z,11Z,14Z-eicosatetraenoyl)-sn-glycero-3-phosphate + ADP + H(+). It carries out the reaction 1-O-hexadecyl-2-(9Z-octadecenoyl)-sn-glycerol + ATP = 1-O-hexadecyl-2-(9Z-octadecenoyl)-sn-glycero-3-phosphate + ADP + H(+). The enzyme catalyses 1-O-hexadecyl-sn-glycerol + ATP = 1-O-hexadecyl-sn-glycero-3-phosphate + ADP + H(+). Its pathway is lipid metabolism; glycerolipid metabolism. With respect to regulation, stimulated by calcium and phosphatidylserine. Diacylglycerol kinase that converts diacylglycerol/DAG into phosphatidic acid/phosphatidate/PA and regulates the respective levels of these two bioactive lipids. Thereby, acts as a central switch between the signaling pathways activated by these second messengers with different cellular targets and opposite effects in numerous biological processes. Also plays an important role in the biosynthesis of complex lipids. Can also phosphorylate 1-alkyl-2-acylglycerol in vitro as efficiently as diacylglycerol provided it contains an arachidonoyl group. Also involved in the production of alkyl-lysophosphatidic acid, another bioactive lipid, through the phosphorylation of 1-alkyl-2-acetyl glycerol. This is Diacylglycerol kinase alpha (Dgka) from Mus musculus (Mouse).